A 270-amino-acid chain; its full sequence is Putative phosphoenolpyruvate synthase regulatory protein (270 aa).

150–157 is a binding site for ADP; sequence GVSRCGKT.

This sequence belongs to the pyruvate, phosphate/water dikinase regulatory protein family. PSRP subfamily.

The enzyme catalyses [pyruvate, water dikinase] + ADP = [pyruvate, water dikinase]-phosphate + AMP + H(+). It carries out the reaction [pyruvate, water dikinase]-phosphate + phosphate + H(+) = [pyruvate, water dikinase] + diphosphate. Functionally, bifunctional serine/threonine kinase and phosphorylase involved in the regulation of the phosphoenolpyruvate synthase (PEPS) by catalyzing its phosphorylation/dephosphorylation. The chain is Putative phosphoenolpyruvate synthase regulatory protein from Shewanella sediminis (strain HAW-EB3).